Reading from the N-terminus, the 181-residue chain is Crossover junction endodeoxyribonuclease RuvC (181 aa).

Active-site residues include aspartate 7, glutamate 67, and aspartate 139. The Mg(2+) site is built by aspartate 7, glutamate 67, and aspartate 139.

Belongs to the RuvC family. Homodimer which binds Holliday junction (HJ) DNA. The HJ becomes 2-fold symmetrical on binding to RuvC with unstacked arms; it has a different conformation from HJ DNA in complex with RuvA. In the full resolvosome a probable DNA-RuvA(4)-RuvB(12)-RuvC(2) complex forms which resolves the HJ. The cofactor is Mg(2+).

It is found in the cytoplasm. The enzyme catalyses Endonucleolytic cleavage at a junction such as a reciprocal single-stranded crossover between two homologous DNA duplexes (Holliday junction).. The RuvA-RuvB-RuvC complex processes Holliday junction (HJ) DNA during genetic recombination and DNA repair. Endonuclease that resolves HJ intermediates. Cleaves cruciform DNA by making single-stranded nicks across the HJ at symmetrical positions within the homologous arms, yielding a 5'-phosphate and a 3'-hydroxyl group; requires a central core of homology in the junction. The consensus cleavage sequence is 5'-(A/T)TT(C/G)-3'. Cleavage occurs on the 3'-side of the TT dinucleotide at the point of strand exchange. HJ branch migration catalyzed by RuvA-RuvB allows RuvC to scan DNA until it finds its consensus sequence, where it cleaves and resolves the cruciform DNA. The sequence is that of Crossover junction endodeoxyribonuclease RuvC from Cupriavidus necator (strain ATCC 17699 / DSM 428 / KCTC 22496 / NCIMB 10442 / H16 / Stanier 337) (Ralstonia eutropha).